Reading from the N-terminus, the 342-residue chain is MKALAKLERAPGLTLTRVKKPEVGHNDVMIRITRTAICGTDIHIWKWDDWAQKTIPVPMHVGHEYVGEIVEMGQEVRGFSIGDRVSGEGHITCGFCRNCRAGRRHLCRNTVGVGVNREGAFAEYLVIPAFNAFKIPPEISDDLAAIFDPFGNATHTALSFNLVGEDVLITGAGPIGIMAVAIAKHVGARNVVITDVNDYRLELARKMGATRAVNVSRETLRDVMRDLHMTEGFDVGLEMSGVPSAFTSMLEAMNHGGKIALLGIPPAQTAIDWTQVIFKGLEIKGIYGREMFETWYKMVAMLQSGLDLSPILTHRFAVDDYEKAFATMLSGESGKVILDWTV.

Cysteine 38 provides a ligand contact to Zn(2+). Active-site charge relay system residues include threonine 40 and histidine 43. Zn(2+) contacts are provided by histidine 63, glutamate 64, cysteine 93, cysteine 96, cysteine 99, and cysteine 107. NAD(+) contacts are provided by residues isoleucine 175, aspartate 195, arginine 200, 262 to 264, and 286 to 287; these read LGI and IY.

It belongs to the zinc-containing alcohol dehydrogenase family. Homotetramer. Zn(2+) serves as cofactor.

The protein resides in the cytoplasm. The catalysed reaction is L-threonine + NAD(+) = (2S)-2-amino-3-oxobutanoate + NADH + H(+). The protein operates within amino-acid degradation; L-threonine degradation via oxydo-reductase pathway; glycine from L-threonine: step 1/2. Catalyzes the NAD(+)-dependent oxidation of L-threonine to 2-amino-3-ketobutyrate. In Paraburkholderia phymatum (strain DSM 17167 / CIP 108236 / LMG 21445 / STM815) (Burkholderia phymatum), this protein is L-threonine 3-dehydrogenase.